A 385-amino-acid chain; its full sequence is uncharacterized protein (385 aa).

Belongs to the mimivirus L17x/L18x family.

This is an uncharacterized protein from Acanthamoeba polyphaga mimivirus (APMV).